The chain runs to 814 residues: Rap guanine nucleotide exchange factor 5 (814 aa).

One can recognise a DEP domain in the interval 43–118 (LQAADLVKDR…DNYVFYQFSS (76 aa)). In terms of domain architecture, N-terminal Ras-GEF spans 301–434 (ARYVVVSGTP…ELKEFQKILG (134 aa)). Positions 578–813 (NTWDLALELM…FELSHRLEPR (236 aa)) constitute a Ras-GEF domain.

It localises to the nucleus. Functionally, guanine nucleotide exchange factor (GEF) for RAP1A, RAP2A and MRAS/M-Ras-GTP. Its association with MRAS inhibits Rap1 activation. In Mus musculus (Mouse), this protein is Rap guanine nucleotide exchange factor 5 (Rapgef5).